Reading from the N-terminus, the 1299-residue chain is MAP3K epsilon protein kinase 1 (1299 aa).

In terms of domain architecture, Protein kinase spans 20–274 (YMLGDEIGKG…AKTLLSHPWI (255 aa)). HEAT repeat units lie at residues 25-62 (EIGK…EDLN) and 86-125 (LKTK…TVYI). Residues 26 to 34 (IGKGAYGRV) and Lys-49 each bind ATP. Catalysis depends on Asp-144, which acts as the Proton acceptor. The HEAT 3 repeat unit spans residues 218 to 256 (PYYDLQPMPALFRIVQDDSPPIPDSLSPDITDFLRQCFK). 2 disordered regions span residues 291–458 (IRYM…GNEL) and 483–509 (GKLN…DGGK). The segment covering 374 to 385 (SSLQSSTCSISS) has biased composition (low complexity). 2 stretches are compositionally biased toward polar residues: residues 415-432 (ATKQ…QRSH) and 488-501 (ASAS…NQGD). 16 HEAT repeats span residues 532-570 (SNDG…LLPL), 611-649 (VFVT…DNID), 653-694 (NACL…SSSL), 698-736 (MFIA…VFKL), 743-780 (NDFC…SGQL), 781-820 (DQHE…PDGD), 868-900 (QPEQ…HIAG), 901-939 (LEKH…AASA), 955-994 (SDTS…ADTT), 998-1036 (YMCS…DPNC), 1043-1081 (ADAI…INKR), 1085-1122 (QAAE…ASRN), 1125-1164 (EQLR…NDNR), 1186-1210 (CPER…RINT), 1211-1249 (TLAV…HHPR), and 1279-1299 (QVLV…NTVL). The disordered stretch occupies residues 795-852 (VLKTRPGGGEEPSNSQRSDLYQPDGDRPRSSSAALDATEDVKQHHRISISSNRTSTDK).

It belongs to the protein kinase superfamily. Ser/Thr protein kinase family. Autophosphorylated. As to expression, expressed in both the sporophytic and the gametophytic tissues, especially in dividing cells.

It localises to the cytoplasm. The protein localises to the cytoskeleton. The protein resides in the microtubule organizing center. It is found in the nucleus. Its subcellular location is the nucleolus. It localises to the cell membrane. It carries out the reaction L-seryl-[protein] + ATP = O-phospho-L-seryl-[protein] + ADP + H(+). It catalyses the reaction L-threonyl-[protein] + ATP = O-phospho-L-threonyl-[protein] + ADP + H(+). Serine/threonine-protein kinase involved in the spatial and temporal control system organizing cortical activities in mitotic and postmitotic cells. Required for the normal functioning of the plasma membrane in developing pollen. Involved in the regulation of cell expansion and embryo development. This is MAP3K epsilon protein kinase 1 from Brassica napus (Rape).